Consider the following 298-residue polypeptide: Protein DR_1172 (298 aa).

3 LEA-like repeats span residues 48-117 (DAAQ…NVGQ), 128-197 (DQAK…DVAQ), and 201-270 (QGAQ…AGKQ). The span at 174-193 (VQDVKADASKAADQAKDKAQ) shows a compositional bias: basic and acidic residues. The interval 174 to 298 (VQDVKADASK…MTGNTNTRKN (125 aa)) is disordered. A compositionally biased stretch (low complexity) spans 194-208 (DVAQNVKQGAQQAAS). A compositionally biased stretch (basic and acidic residues) spans 209–233 (DAKDKVQDVKADASRAADQAKDKAQ). A compositionally biased stretch (low complexity) spans 275-298 (GSTTNNAGTAGNTGMTGNTNTRKN).

The protein belongs to the LEA type 1 family.

In Deinococcus radiodurans (strain ATCC 13939 / DSM 20539 / JCM 16871 / CCUG 27074 / LMG 4051 / NBRC 15346 / NCIMB 9279 / VKM B-1422 / R1), this protein is Protein DR_1172.